The following is a 139-amino-acid chain: Orientotoxin-2 (139 aa).

As to expression, expressed by the venom gland.

The protein resides in the secreted. It carries out the reaction a 1,2-diacyl-sn-glycero-3-phosphocholine + H2O = a 1-acyl-sn-glycero-3-phosphocholine + a fatty acid + H(+). In terms of biological role, has a highly toxic phospholipase A2 activity. The chain is Orientotoxin-2 from Vespa orientalis (Oriental hornet).